The chain runs to 307 residues: Acetaldehyde dehydrogenase (307 aa).

12-15 (SGNI) is a binding site for NAD(+). C130 (acyl-thioester intermediate) is an active-site residue. NAD(+) contacts are provided by residues 161–169 (SVGPGTRQN) and N272.

The protein belongs to the acetaldehyde dehydrogenase family.

It catalyses the reaction acetaldehyde + NAD(+) + CoA = acetyl-CoA + NADH + H(+). The sequence is that of Acetaldehyde dehydrogenase from Shewanella pealeana (strain ATCC 700345 / ANG-SQ1).